We begin with the raw amino-acid sequence, 457 residues long: Argininosuccinate lyase (457 aa).

This sequence belongs to the lyase 1 family. Argininosuccinate lyase subfamily.

Its subcellular location is the cytoplasm. It carries out the reaction 2-(N(omega)-L-arginino)succinate = fumarate + L-arginine. It functions in the pathway amino-acid biosynthesis; L-arginine biosynthesis; L-arginine from L-ornithine and carbamoyl phosphate: step 3/3. The protein is Argininosuccinate lyase of Haemophilus influenzae (strain PittGG).